The primary structure comprises 180 residues: Outer-membrane lipoprotein LolB (180 aa).

Residues 1–16 (MIRRVLLLSLALLLAG) form the signal peptide. Cys17 carries N-palmitoyl cysteine lipidation. Cys17 is lipidated: S-diacylglycerol cysteine.

Belongs to the LolB family. Monomer.

It is found in the cell outer membrane. Its function is as follows. Plays a critical role in the incorporation of lipoproteins in the outer membrane after they are released by the LolA protein. This is Outer-membrane lipoprotein LolB from Chromobacterium violaceum (strain ATCC 12472 / DSM 30191 / JCM 1249 / CCUG 213 / NBRC 12614 / NCIMB 9131 / NCTC 9757 / MK).